The chain runs to 356 residues: ATP-dependent 6-phosphofructokinase (356 aa).

Residues G15, 78–79 (KG), and 115–118 (GEGT) each bind ATP. A Mg(2+)-binding site is contributed by E116. Residues 138–140 (TID), R175, 182–184 (MGR), E235, R272, and 278–281 (HLQR) contribute to the substrate site. The Proton acceptor role is filled by D140.

Belongs to the phosphofructokinase type A (PFKA) family. Mixed-substrate PFK group III subfamily. As to quaternary structure, homodimer or homotetramer. It depends on Mg(2+) as a cofactor.

It localises to the cytoplasm. The enzyme catalyses beta-D-fructose 6-phosphate + ATP = beta-D-fructose 1,6-bisphosphate + ADP + H(+). The protein operates within carbohydrate degradation; glycolysis; D-glyceraldehyde 3-phosphate and glycerone phosphate from D-glucose: step 3/4. In terms of biological role, catalyzes the phosphorylation of D-fructose 6-phosphate to fructose 1,6-bisphosphate by ATP, the first committing step of glycolysis. This is ATP-dependent 6-phosphofructokinase from Chloroflexus aggregans (strain MD-66 / DSM 9485).